The sequence spans 379 residues: Homoserine O-acetyltransferase (379 aa).

One can recognise an AB hydrolase-1 domain in the interval 45-355; the sequence is NAILILHALT…PHGHDAFLIE (311 aa). S151 serves as the catalytic Nucleophile. Residue R220 participates in substrate binding. Residues D316 and H349 contribute to the active site. Position 350 (D350) interacts with substrate.

Belongs to the AB hydrolase superfamily. MetX family. Homodimer.

It is found in the cytoplasm. The enzyme catalyses L-homoserine + acetyl-CoA = O-acetyl-L-homoserine + CoA. Its pathway is amino-acid biosynthesis; L-methionine biosynthesis via de novo pathway; O-acetyl-L-homoserine from L-homoserine: step 1/1. Functionally, transfers an acetyl group from acetyl-CoA to L-homoserine, forming acetyl-L-homoserine. This chain is Homoserine O-acetyltransferase, found in Carboxydothermus hydrogenoformans (strain ATCC BAA-161 / DSM 6008 / Z-2901).